The sequence spans 350 residues: Pleckstrin (350 aa).

The PH 1 domain occupies 4–101 (KRIREGYLVK…WVRDIKKAIK (98 aa)). Lys64 is modified (N6-acetyllysine). Phosphoserine is present on residues Ser113 and Ser117. The 86-residue stretch at 136–221 (PEKGIKELNL…NPDAFYYFPD (86 aa)) folds into the DEP domain. Residues 244-347 (IIIKQGCLLK…WIKAIQVASR (104 aa)) enclose the PH 2 domain.

Functionally, major protein kinase C substrate of platelets. The chain is Pleckstrin (Plek) from Rattus norvegicus (Rat).